Reading from the N-terminus, the 153-residue chain is NAD(P)H-quinone oxidoreductase subunit N (153 aa).

Belongs to the complex I NdhN subunit family. NDH-1 can be composed of about 15 different subunits; different subcomplexes with different compositions have been identified which probably have different functions.

The protein resides in the cellular thylakoid membrane. It catalyses the reaction a plastoquinone + NADH + (n+1) H(+)(in) = a plastoquinol + NAD(+) + n H(+)(out). It carries out the reaction a plastoquinone + NADPH + (n+1) H(+)(in) = a plastoquinol + NADP(+) + n H(+)(out). Functionally, NDH-1 shuttles electrons from an unknown electron donor, via FMN and iron-sulfur (Fe-S) centers, to quinones in the respiratory and/or the photosynthetic chain. The immediate electron acceptor for the enzyme in this species is believed to be plastoquinone. Couples the redox reaction to proton translocation, and thus conserves the redox energy in a proton gradient. Cyanobacterial NDH-1 also plays a role in inorganic carbon-concentration. The chain is NAD(P)H-quinone oxidoreductase subunit N from Synechococcus sp. (strain RCC307).